Reading from the N-terminus, the 336-residue chain is uncharacterized protein (336 aa).

Residue 29-36 (GPKSSGKS) participates in ATP binding.

It belongs to the archaeal ATPase family.

This is an uncharacterized protein from Methanocaldococcus jannaschii (strain ATCC 43067 / DSM 2661 / JAL-1 / JCM 10045 / NBRC 100440) (Methanococcus jannaschii).